Here is a 418-residue protein sequence, read N- to C-terminus: AP-3 complex subunit mu-1 (418 aa).

Residues 176–417 (NNEAYFDVVE…VTKAGKFQVR (242 aa)) enclose the MHD domain.

This sequence belongs to the adaptor complexes medium subunit family. In terms of assembly, adaptor protein complex 3 (AP-3) is a heterotetramer composed of two large adaptins (delta-type subunit AP3D1 and beta-type subunit AP3B1 or AP3B2), a medium adaptin (mu-type subunit AP3M1 or AP3M2) and a small adaptin (sigma-type subunit APS1 or AP3S2). Interacts with AGAP1. AP-3 associates with the BLOC-1 complex.

It is found in the golgi apparatus. It localises to the cytoplasmic vesicle membrane. In terms of biological role, part of the AP-3 complex, an adaptor-related complex which is not clathrin-associated. The complex is associated with the Golgi region as well as more peripheral structures. It facilitates the budding of vesicles from the Golgi membrane and may be directly involved in trafficking to lysosomes. In concert with the BLOC-1 complex, AP-3 is required to target cargos into vesicles assembled at cell bodies for delivery into neurites and nerve terminals. The sequence is that of AP-3 complex subunit mu-1 (Ap3m1) from Mus musculus (Mouse).